The primary structure comprises 464 residues: ATP synthase subunit beta 1 (464 aa).

153-160 (GGAGVGKT) contacts ATP.

It belongs to the ATPase alpha/beta chains family. F-type ATPases have 2 components, CF(1) - the catalytic core - and CF(0) - the membrane proton channel. CF(1) has five subunits: alpha(3), beta(3), gamma(1), delta(1), epsilon(1). CF(0) has three main subunits: a(1), b(2) and c(9-12). The alpha and beta chains form an alternating ring which encloses part of the gamma chain. CF(1) is attached to CF(0) by a central stalk formed by the gamma and epsilon chains, while a peripheral stalk is formed by the delta and b chains.

It localises to the cell inner membrane. It catalyses the reaction ATP + H2O + 4 H(+)(in) = ADP + phosphate + 5 H(+)(out). Its function is as follows. Produces ATP from ADP in the presence of a proton gradient across the membrane. The catalytic sites are hosted primarily by the beta subunits. The polypeptide is ATP synthase subunit beta 1 (Burkholderia mallei (strain SAVP1)).